Here is an 859-residue protein sequence, read N- to C-terminus: Leucine--tRNA ligase (859 aa).

The 'HIGH' region signature appears at 42–52 (PYPSGRLHMGH). Positions 618-622 (KMSKS) match the 'KMSKS' region motif. Residue Lys-621 participates in ATP binding.

The protein belongs to the class-I aminoacyl-tRNA synthetase family.

It is found in the cytoplasm. The catalysed reaction is tRNA(Leu) + L-leucine + ATP = L-leucyl-tRNA(Leu) + AMP + diphosphate. This is Leucine--tRNA ligase from Shewanella baltica (strain OS155 / ATCC BAA-1091).